Consider the following 495-residue polypeptide: 3-octaprenyl-4-hydroxybenzoate carboxy-lyase (495 aa).

Asparagine 172 lines the Mn(2+) pocket. Prenylated FMN contacts are provided by residues 175–177 (IYR), 189–191 (RWL), and 194–195 (RG). Position 238 (glutamate 238) interacts with Mn(2+). Catalysis depends on aspartate 287, which acts as the Proton donor.

The protein belongs to the UbiD family. In terms of assembly, homohexamer. The cofactor is prenylated FMN. Requires Mn(2+) as cofactor.

The protein localises to the cell membrane. The catalysed reaction is a 4-hydroxy-3-(all-trans-polyprenyl)benzoate + H(+) = a 2-(all-trans-polyprenyl)phenol + CO2. It functions in the pathway cofactor biosynthesis; ubiquinone biosynthesis. Catalyzes the decarboxylation of 3-octaprenyl-4-hydroxy benzoate to 2-octaprenylphenol, an intermediate step in ubiquinone biosynthesis. In Marinobacter nauticus (strain ATCC 700491 / DSM 11845 / VT8) (Marinobacter aquaeolei), this protein is 3-octaprenyl-4-hydroxybenzoate carboxy-lyase.